Reading from the N-terminus, the 308-residue chain is Testis-specific Y-encoded protein 8 (308 aa).

The protein belongs to the nucleosome assembly protein (NAP) family.

It is found in the cytoplasm. The protein resides in the nucleus. Its function is as follows. May be involved in sperm differentiation and proliferation. This is Testis-specific Y-encoded protein 8 (TSPY8) from Homo sapiens (Human).